The chain runs to 158 residues: Secreted RxLR effector protein 131 (158 aa).

An N-terminal signal peptide occupies residues 1–20 (MRQIPLVVVLLLAYAARLQG). The RxLR-dEER motif lies at 39 to 57 (RDLDGSTTSMSVNVDDEER). The tract at residues 120 to 158 (KGNVKYLAIIYVICILSVLGILGTVFAINRNISNQYIHE) is host BKI1-binding. A helical transmembrane segment spans residues 127–147 (AIIYVICILSVLGILGTVFAI). An N-linked (GlcNAc...) asparagine glycan is attached at asparagine 150.

The protein belongs to the RxLR effector family. Interacts with host BKI1.

It is found in the secreted. The protein localises to the host cell membrane. Functionally, secreted effector that suppresses pathogen-associated molecular pattern (PAMP)-triggered immunity (PTI) in host plants. Suppresses both defense-related brassinosteroid (BR) and ERECTA (ER) signaling pathways in planta by interacting with host BRI1 kinase inhibitor 1 (BKI1) at the host plasma membrane, leading to a host dwarf phenotype. This Plasmopara viticola (Downy mildew of grapevine) protein is Secreted RxLR effector protein 131.